A 359-amino-acid chain; its full sequence is Peptide chain release factor 1 (359 aa).

Glutamine 236 is subject to N5-methylglutamine. Positions 288–307 (QDEQDAERKSTIGTGDRSER) are disordered. A compositionally biased stretch (basic and acidic residues) spans 293 to 307 (AERKSTIGTGDRSER).

This sequence belongs to the prokaryotic/mitochondrial release factor family. In terms of processing, methylated by PrmC. Methylation increases the termination efficiency of RF1.

It localises to the cytoplasm. Peptide chain release factor 1 directs the termination of translation in response to the peptide chain termination codons UAG and UAA. In Streptococcus sanguinis (strain SK36), this protein is Peptide chain release factor 1.